Here is a 391-residue protein sequence, read N- to C-terminus: Pepsin B (391 aa).

A signal peptide spans 1–16 (MKCLILALICLQLSEG). A propeptide spans 17–60 (LVVRQILHKGKSIRERMEENGVLEDFLRYNKKADPAAKFLFNKD) (activation peptide). The Peptidase A1 domain occupies 75–388 (YFGEISIGTP…DMANNRVGFA (314 aa)). The active site involves Asp-93. Disulfide bonds link Cys-106–Cys-111 and Cys-270–Cys-274. Residue Asp-279 is part of the active site. Cys-313 and Cys-346 are joined by a disulfide.

This sequence belongs to the peptidase A1 family.

Its subcellular location is the secreted. It catalyses the reaction Degradation of gelatin, little activity on hemoglobin. Specificity on B chain of insulin more restricted than that of pepsin A. Does not cleave 1-Phe-|-Val-2, 4-Gln-|-His-5 or 23-Gly-|-Phe-24.. In terms of biological role, hydrolyzes various peptides including beta-endorphin, insulin B chain, dynorphin A, and neurokinin A, with high specificity for the cleavage of the Phe-Xaa bonds. The polypeptide is Pepsin B (Monodelphis domestica (Gray short-tailed opossum)).